Consider the following 243-residue polypeptide: Terpene cyclase dpmaB (243 aa).

The next 6 membrane-spanning stretches (helical) occupy residues 11 to 31 (PGYL…GLGW), 51 to 71 (ALMP…IYPF), 112 to 132 (LPFI…ALAL), 141 to 161 (AFSA…QLLS), 169 to 189 (SYFL…QDVL), and 207 to 227 (IWFV…LWYV).

This sequence belongs to the paxB family.

Its subcellular location is the membrane. It functions in the pathway secondary metabolite biosynthesis; terpenoid biosynthesis. Terpene cyclase; part of the gene cluster that mediates the biosynthesis of the diterpenoid pyrones subglutinols A and B. The first step of the pathway is the synthesis of the alpha-pyrone moiety by the polyketide synthase dpmaA via condensation of one acetyl-CoA starter unit with 3 malonyl-CoA units and 2 methylations. The alpha-pyrone is then combined with geranylgeranyl pyrophosphate (GGPP) formed by the GGPP synthase dpmaD through the action of the prenyltransferase dpmaC to yield a linear alpha-pyrone diterpenoid. Subsequent steps in the diterpenoid pyrone biosynthetic pathway involve the decalin core formation, which is initiated by the epoxidation of the C10-C11 olefin by the FAD-dependent oxidoreductase dpmaE, and is followed by a cyclization cascade catalyzed by the terpene cyclase dpmaB. The dehydrogenase dpmaF is then involved in tetrahydrofuran (THF) ring formation at the C5 unit to complete the formation of subglutinols A and B. This chain is Terpene cyclase dpmaB, found in Metarhizium anisopliae (Entomophthora anisopliae).